Reading from the N-terminus, the 108-residue chain is Succinate dehydrogenase assembly factor 4, mitochondrial (108 aa).

The N-terminal 20 residues, 1-20 (MTPSRLPWLLSWVSATAWRA), are a transit peptide targeting the mitochondrion. The segment at 31–108 (RKTSSSQGGK…WERKGRCIDF (78 aa)) is disordered. Composition is skewed to basic and acidic residues over residues 52–87 (KLPE…EKGG) and 95–108 (RYGD…CIDF).

It belongs to the SDHAF4 family. In terms of assembly, interacts with SDHA in its FAD-bound form.

It localises to the mitochondrion matrix. Its function is as follows. Plays an essential role in the assembly of succinate dehydrogenase (SDH), an enzyme complex (also referred to as respiratory complex II) that is a component of both the tricarboxylic acid (TCA) cycle and the mitochondrial electron transport chain, and which couples the oxidation of succinate to fumarate with the reduction of ubiquinone (coenzyme Q) to ubiquinol. Binds to the flavoprotein subunit SDHA in its FAD-bound form, blocking the generation of excess reactive oxygen species (ROS) and facilitating its assembly with the iron-sulfur protein subunit SDHB into the SDH catalytic dimer. This Homo sapiens (Human) protein is Succinate dehydrogenase assembly factor 4, mitochondrial.